The primary structure comprises 218 residues: uncharacterized protein (218 aa).

3 disordered regions span residues 30–71, 93–120, and 133–209; these read FSHR…RSPP, SGRG…PRPD, and MEVE…PGFP. A compositionally biased stretch (low complexity) spans 43-71; the sequence is PGAPAVVPAPVSAPRPASSPARSESRSPP. Positions 94-110 are enriched in gly residues; it reads GRGGGGGGGGGARTGGG. The segment covering 138–148 has biased composition (pro residues); that stretch reads PPHPPPQPQVC. Gly residues predominate over residues 156-171; it reads PGHGRAGLPEGKGPGG. Positions 191-209 are enriched in low complexity; that stretch reads RAPSPAAPRRGRLPAPGFP.

This is an uncharacterized protein from Homo sapiens (Human).